The primary structure comprises 403 residues: Coenzyme A biosynthesis bifunctional protein CoaBC (403 aa).

The interval 1 to 197 is phosphopantothenoylcysteine decarboxylase; sequence MISEIMHPTK…GNNLKKEGNR (197 aa). The segment at 198 to 403 is phosphopantothenate--cysteine ligase; that stretch reads VLILNGGTVE…VEKVKKLVKS (206 aa). CTP contacts are provided by D285, K294, and F327.

In the N-terminal section; belongs to the HFCD (homo-oligomeric flavin containing Cys decarboxylase) superfamily. It in the C-terminal section; belongs to the PPC synthetase family. As to quaternary structure, homododecamer. The CoaC domain is responsible for dodecamer formation. It depends on Mg(2+) as a cofactor. Requires FMN as cofactor.

The enzyme catalyses N-[(R)-4-phosphopantothenoyl]-L-cysteine + H(+) = (R)-4'-phosphopantetheine + CO2. It catalyses the reaction (R)-4'-phosphopantothenate + L-cysteine + CTP = N-[(R)-4-phosphopantothenoyl]-L-cysteine + CMP + diphosphate + H(+). Its pathway is cofactor biosynthesis; coenzyme A biosynthesis. Its function is as follows. Catalyzes two sequential steps in the biosynthesis of coenzyme A. In the first step cysteine is conjugated to 4'-phosphopantothenate to form 4-phosphopantothenoylcysteine. In the second step the latter compound is decarboxylated to form 4'-phosphopantotheine. The protein is Coenzyme A biosynthesis bifunctional protein CoaBC of Methanocaldococcus jannaschii (strain ATCC 43067 / DSM 2661 / JAL-1 / JCM 10045 / NBRC 100440) (Methanococcus jannaschii).